The sequence spans 110 residues: Senescence associated gene 20 (110 aa).

This is Senescence associated gene 20 from Arabidopsis thaliana (Mouse-ear cress).